The primary structure comprises 287 residues: 2-dehydro-3-deoxyphosphooctonate aldolase (287 aa).

This sequence belongs to the KdsA family.

Its subcellular location is the cytoplasm. It catalyses the reaction D-arabinose 5-phosphate + phosphoenolpyruvate + H2O = 3-deoxy-alpha-D-manno-2-octulosonate-8-phosphate + phosphate. It functions in the pathway carbohydrate biosynthesis; 3-deoxy-D-manno-octulosonate biosynthesis; 3-deoxy-D-manno-octulosonate from D-ribulose 5-phosphate: step 2/3. Its pathway is bacterial outer membrane biogenesis; lipopolysaccharide biosynthesis. The protein is 2-dehydro-3-deoxyphosphooctonate aldolase of Caulobacter vibrioides (strain ATCC 19089 / CIP 103742 / CB 15) (Caulobacter crescentus).